Here is an 853-residue protein sequence, read N- to C-terminus: Envelope glycoprotein gp160 (853 aa).

The N-terminal stretch at 1–31 (MRVKEIRKNWQHLRGGILLLGMLMICSAAKE) is a signal peptide. At 32-681 (KTWVTIYYGV…ITNWLWYIRL (650 aa)) the chain is on the extracellular side. An intrachain disulfide couples C53 to C73. N-linked (GlcNAc...) asparagine; by host glycans are attached at residues N87, N129, N134, N138, N157, N189, N199, N232, N236, N243, N264, N278, N291, N297, N303, N333, N340, N356, and N362. Intrachain disulfides connect C118–C207, C125–C198, C130–C158, C220–C249, and C230–C241. Residues 130 to 157 (CTNLNITKNTTNPTSSSWGMMEKGEIKN) are V1. Positions 158 to 198 (CSFYITTSIRNKVKKEYALFNRLDVVPIENTNNTKYRLISC) are V2. The V3 stretch occupies residues 298–331 (CTRPNNNTRRRLSIGPGRAFYARRNIIGDIRQAH). Cysteines 298 and 332 form a disulfide. The interval 364–374 (SSGGDPEIVMH) is CD4-binding loop. Intrachain disulfides connect C378/C441 and C385/C414. The tract at residues 385 to 414 (CNTAQLFNSTWNVTGGTNGTEGNDIITLQC) is V4. 5 N-linked (GlcNAc...) asparagine; by host glycosylation sites follow: N392, N396, N402, N444, and N456. The interval 459–468 (ETETEIFRPG) is V5. The fusion peptide stretch occupies residues 509–529 (AVGIGAVFLGFLGAAGSTMGA). The immunosuppression stretch occupies residues 571-589 (KQLQARVLALERYLRDQQL). C595 and C601 form a disulfide bridge. N-linked (GlcNAc...) asparagine; by host glycans are attached at residues N608, N613, N622, and N634. The stretch at 630–664 (REIDNYTDYIYDLLEKSQTQQEKNEKELLELDKWA) forms a coiled coil. An MPER; binding to GalCer region spans residues 659 to 680 (ELDKWASLWNWFDITNWLWYIR). The chain crosses the membrane as a helical span at residues 682 to 702 (FIMIVGGLIGLRIVFAVLSIV). Topologically, residues 703-853 (NRVRQGYSPL…IRQGLERALL (151 aa)) are cytoplasmic. The short motif at 709 to 712 (YSPL) is the YXXL motif; contains endocytosis signal element. The tract at residues 718 to 740 (LPASRGPDRPEGTEEEGGERDRD) is disordered. 2 S-palmitoyl cysteine; by host lipidation sites follow: C761 and C834. Positions 852–853 (LL) match the Di-leucine internalization motif motif.

Belongs to the HIV-1 env protein family. As to quaternary structure, the mature envelope protein (Env) consists of a homotrimer of non-covalently associated gp120-gp41 heterodimers. The resulting complex protrudes from the virus surface as a spike. There seems to be as few as 10 spikes on the average virion. Interacts with host CD4, CCR5 and CXCR4. Gp120 also interacts with the C-type lectins CD209/DC-SIGN and CLEC4M/DC-SIGNR (collectively referred to as DC-SIGN(R)). Gp120 and gp41 interact with GalCer. Gp120 interacts with host ITGA4/ITGB7 complex; on CD4+ T-cells, this interaction results in rapid activation of integrin ITGAL/LFA-1, which facilitates efficient cell-to-cell spreading of HIV-1. Gp120 interacts with cell-associated heparan sulfate; this interaction increases virus infectivity on permissive cells and may be involved in infection of CD4- cells. In terms of assembly, the mature envelope protein (Env) consists of a homotrimer of non-covalently associated gp120-gp41 heterodimers. The resulting complex protrudes from the virus surface as a spike. There seems to be as few as 10 spikes on the average virion. In terms of processing, highly glycosylated by host. The high number of glycan on the protein is reffered to as 'glycan shield' because it contributes to hide protein sequence from adaptive immune system. Palmitoylation of the transmembrane protein and of Env polyprotein (prior to its proteolytic cleavage) is essential for their association with host cell membrane lipid rafts. Palmitoylation is therefore required for envelope trafficking to classical lipid rafts, but not for viral replication. Post-translationally, specific enzymatic cleavages in vivo yield mature proteins. Envelope glycoproteins are synthesized as an inactive precursor that is heavily N-glycosylated and processed likely by host cell furin in the Golgi to yield the mature SU and TM proteins. The cleavage site between SU and TM requires the minimal sequence [KR]-X-[KR]-R. About 2 of the 9 disulfide bonds of gp41 are reduced by P4HB/PDI, following binding to CD4 receptor.

The protein localises to the virion membrane. It localises to the host cell membrane. The protein resides in the host endosome membrane. In terms of biological role, oligomerizes in the host endoplasmic reticulum into predominantly trimers. In a second time, gp160 transits in the host Golgi, where glycosylation is completed. The precursor is then proteolytically cleaved in the trans-Golgi and thereby activated by cellular furin or furin-like proteases to produce gp120 and gp41. Attaches the virus to the host lymphoid cell by binding to the primary receptor CD4. This interaction induces a structural rearrangement creating a high affinity binding site for a chemokine coreceptor like CXCR4 and/or CCR5. Acts as a ligand for CD209/DC-SIGN and CLEC4M/DC-SIGNR, which are respectively found on dendritic cells (DCs), and on endothelial cells of liver sinusoids and lymph node sinuses. These interactions allow capture of viral particles at mucosal surfaces by these cells and subsequent transmission to permissive cells. HIV subverts the migration properties of dendritic cells to gain access to CD4+ T-cells in lymph nodes. Virus transmission to permissive T-cells occurs either in trans (without DCs infection, through viral capture and transmission), or in cis (following DCs productive infection, through the usual CD4-gp120 interaction), thereby inducing a robust infection. In trans infection, bound virions remain infectious over days and it is proposed that they are not degraded, but protected in non-lysosomal acidic organelles within the DCs close to the cell membrane thus contributing to the viral infectious potential during DCs' migration from the periphery to the lymphoid tissues. On arrival at lymphoid tissues, intact virions recycle back to DCs' cell surface allowing virus transmission to CD4+ T-cells. Its function is as follows. Acts as a class I viral fusion protein. Under the current model, the protein has at least 3 conformational states: pre-fusion native state, pre-hairpin intermediate state, and post-fusion hairpin state. During fusion of viral and target intracellular membranes, the coiled coil regions (heptad repeats) assume a trimer-of-hairpins structure, positioning the fusion peptide in close proximity to the C-terminal region of the ectodomain. The formation of this structure appears to drive apposition and subsequent fusion of viral and target cell membranes. Complete fusion occurs in host cell endosomes and is dynamin-dependent, however some lipid transfer might occur at the plasma membrane. The virus undergoes clathrin-dependent internalization long before endosomal fusion, thus minimizing the surface exposure of conserved viral epitopes during fusion and reducing the efficacy of inhibitors targeting these epitopes. Membranes fusion leads to delivery of the nucleocapsid into the cytoplasm. This Human immunodeficiency virus type 1 group M subtype B (strain 89.6) (HIV-1) protein is Envelope glycoprotein gp160.